A 99-amino-acid polypeptide reads, in one-letter code: Acylphosphatase (99 aa).

In terms of domain architecture, Acylphosphatase-like spans 5-97; sequence IRQVMISGRV…QPGERFSILS (93 aa). Residues Arg20 and Asn38 contribute to the active site.

The protein belongs to the acylphosphatase family.

The catalysed reaction is an acyl phosphate + H2O = a carboxylate + phosphate + H(+). This is Acylphosphatase (acyP) from Rhodopseudomonas palustris (strain ATCC BAA-98 / CGA009).